Here is a 1576-residue protein sequence, read N- to C-terminus: Disco-interacting protein 2 homolog B (1576 aa).

A phosphoserine mark is found at Ser9, Ser50, and Ser53. The DMAP1-binding domain maps to 12-131; the sequence is AVAALPPEVR…PMPTKRRSTF (120 aa). The disordered stretch occupies residues 31–167; the sequence is LSEGDITQKG…AALSAALQQS (137 aa). Residues 52–62 are compositionally biased toward polar residues; that stretch reads YSPQTQETDSA. Residues 70 to 83 show a composition bias toward low complexity; that stretch reads QTPAPSAAQTSAPS. Residue Thr71 is modified to Phosphothreonine. Residues 92-104 show a composition bias toward basic and acidic residues; the sequence is GARDERYRSDIHT. Phosphoserine is present on Ser100. Thr140 bears the Phosphothreonine mark. Phosphoserine is present on residues Ser146, Ser148, and Ser153. Residues 155–167 show a composition bias toward low complexity; the sequence is RRQAALSAALQQS. Phosphoserine occurs at positions 178, 193, and 203. The tract at residues 179-201 is disordered; that stretch reads IQGSSTSSSASSTLSHGEVKGTS. The segment covering 182-193 has biased composition (low complexity); the sequence is SSTSSSASSTLS. The disordered stretch occupies residues 217–246; sequence SAPPDVTTTTSSSSSSSSIRPANIDLPPSG. Low complexity predominate over residues 223–234; sequence TTTTSSSSSSSS. Ser259 carries the post-translational modification Phosphoserine.

This sequence belongs to the DIP2 family. Interacts with alpha-tubulin. As to expression, moderately expressed in adult brain, placenta, skeletal muscle, heart, kidney, pancreas, lung, spleen and colon. Expression was weaker in adult liver, kidney, spleen, and ovary, and in fetal brain and liver. In the brain, it is expressed in the cerebral cortex; the frontal, parietal, occipital and temporal lobes; the paracentral gyrus; the pons; the corpus callosum and the hippocampus. Highest expression levels in the brain were found in the cerebral cortex and the frontal and parietal lobes.

It localises to the cell projection. Its subcellular location is the dendrite. The protein resides in the axon. The protein localises to the perikaryon. Functionally, negatively regulates axonal outgrowth and is essential for normal synaptic transmission. Not required for regulation of axon polarity. Promotes acetylation of alpha-tubulin. This Homo sapiens (Human) protein is Disco-interacting protein 2 homolog B (DIP2B).